The chain runs to 126 residues: Small ribosomal subunit protein uS11 (126 aa).

The protein belongs to the universal ribosomal protein uS11 family. In terms of assembly, part of the 30S ribosomal subunit. Interacts with proteins S7 and S18. Binds to IF-3.

In terms of biological role, located on the platform of the 30S subunit, it bridges several disparate RNA helices of the 16S rRNA. Forms part of the Shine-Dalgarno cleft in the 70S ribosome. The polypeptide is Small ribosomal subunit protein uS11 (Treponema pallidum (strain Nichols)).